A 489-amino-acid polypeptide reads, in one-letter code: Ribulose bisphosphate carboxylase large chain (489 aa).

Asn128 and Thr178 together coordinate substrate. Residue Lys180 is the Proton acceptor of the active site. Lys182 is a binding site for substrate. Residues Lys206, Asp208, and Glu209 each coordinate Mg(2+). Lys206 carries the N6-carboxylysine modification. His298 serves as the catalytic Proton acceptor. Residues Arg299, His331, and Ser383 each coordinate substrate.

It belongs to the RuBisCO large chain family. Type I subfamily. In terms of assembly, heterohexadecamer of 8 large chains and 8 small chains. Mg(2+) serves as cofactor.

It carries out the reaction 2 (2R)-3-phosphoglycerate + 2 H(+) = D-ribulose 1,5-bisphosphate + CO2 + H2O. The enzyme catalyses D-ribulose 1,5-bisphosphate + O2 = 2-phosphoglycolate + (2R)-3-phosphoglycerate + 2 H(+). In terms of biological role, ruBisCO catalyzes two reactions: the carboxylation of D-ribulose 1,5-bisphosphate, the primary event in carbon dioxide fixation, as well as the oxidative fragmentation of the pentose substrate. Both reactions occur simultaneously and in competition at the same active site. This is Ribulose bisphosphate carboxylase large chain from Nitrosospira sp. (strain 40KI).